The sequence spans 162 residues: Caveolin-2 (162 aa).

Over 1–86 (MGLETEKADV…FEISKYVIYK (86 aa)) the chain is Cytoplasmic. Y19 carries the phosphotyrosine; by SRC modification. Residues S20 and S23 each carry the phosphoserine modification. A Phosphotyrosine; by SRC modification is found at Y27. At S36 the chain carries Phosphoserine. An intramembrane region (helical) is located at residues 87 to 107 (FLTVFLAIPLAFAAGIIFATL). Residues 108-162 (SCLHIWIIMPFVKTCLMVLPSVQTIWRSVTDAVIAPLCTSVGRVFSSVSLQLSRD) lie on the Cytoplasmic side of the membrane.

Belongs to the caveolin family. Monomer or homodimer. Interacts with CAV1; the interaction forms a stable heterooligomeric complex that is required for targeting to lipid rafts and for caveolae formation. Tyrosine phosphorylated forms do not form heterooligomers with the Tyr-19-phosphorylated form existing as a monomer or dimer, and the Tyr-27-form as a monomer only. Interacts (tyrosine phosphorylated form) with the SH2 domain-containing proteins, RASA1, NCK1 and SRC. Interacts (tyrosine phosphorylated form) with INSR, the interaction (Tyr-27-phosphorylated form) is increased on insulin stimulation. Interacts (Tyr-19 phosphorylated form) with MAPK1 (phosphorylated form); the interaction, promoted by insulin, leads to nuclear location and MAPK1 activation. Interacts with STAT3; the interaction is increased on insulin-induced tyrosine phosphorylation leading to STAT activation. Phosphorylated on serine and tyrosine residues. CAV1 promotes phosphorylation on Ser-23 which then targets the complex to the plasma membrane, lipid rafts and caveolae. Phosphorylation on Ser-36 appears to modulate mitosis in endothelial cells. Phosphorylation on both Tyr-19 and Tyr-27 is required for insulin-induced 'Ser-727' phosphorylation of STAT3 and its activation. Phosphorylation on Tyr-19 is required for insulin-induced phosphorylation of MAPK1 and DNA binding of STAT3. Tyrosine phosphorylation is induced by both EGF and insulin (By. similarity).

Its subcellular location is the nucleus. It is found in the cytoplasm. The protein localises to the golgi apparatus membrane. The protein resides in the cell membrane. It localises to the membrane. Its subcellular location is the caveola. May act as a scaffolding protein within caveolar membranes. Interacts directly with G-protein alpha subunits and can functionally regulate their activity. Acts as an accessory protein in conjunction with CAV1 in targeting to lipid rafts and driving caveolae formation. The Ser-36 phosphorylated form has a role in modulating mitosis in endothelial cells. Positive regulator of cellular mitogenesis of the MAPK signaling pathway. Required for the insulin-stimulated nuclear translocation and activation of MAPK1 and STAT3, and the subsequent regulation of cell cycle progression. The polypeptide is Caveolin-2 (CAV2) (Carollia perspicillata (Seba's short-tailed bat)).